Here is a 128-residue protein sequence, read N- to C-terminus: Sulfurtransferase TusD (128 aa).

The active-site Cysteine persulfide intermediate is the Cys78.

The protein belongs to the DsrE/TusD family. In terms of assembly, heterohexamer, formed by a dimer of trimers. The hexameric TusBCD complex contains 2 copies each of TusB, TusC and TusD. The TusBCD complex interacts with TusE.

The protein localises to the cytoplasm. Functionally, part of a sulfur-relay system required for 2-thiolation of 5-methylaminomethyl-2-thiouridine (mnm(5)s(2)U) at tRNA wobble positions. Accepts sulfur from TusA and transfers it in turn to TusE. This is Sulfurtransferase TusD from Buchnera aphidicola subsp. Acyrthosiphon pisum (strain 5A).